Reading from the N-terminus, the 403-residue chain is MKIKQLPAIFEPARPVLQKIEEAGYEAYFVGGCVRDTILHDEIHDIDIATSAYPSEIKAIFNHTVDTGIEHGTVMILDHGTGYETTTFRTESGYQDYRRPDKVTFVRSLSEDLQRRDFTINALALREDGEVIDLFDGLEDLQKHLIKAVGNPNERFHEDALRMMRAVRFASKLDFVIDTATLKGIKENAPLLEKIAVERIRVELEKLLLGQNPVAGLKDFIATGLYQYCPGLENAQAALSALLILNQWHLENEAQLWSVLGLQLQLDQKEIGKFLKKWKTANDLIAQVKKVVPAVQAIRQRALTPTLMFNTGETALHDANQVAKLYGWAIDDEELQKAYQKLPIKNAKELAIDGRVLITKAGVKPGPLMGKILQQLTLAVVNGEIANNATVLLEKVEEITKEG.

The ATP site is built by glycine 32 and arginine 35. CTP is bound by residues glycine 32 and arginine 35. 2 residues coordinate Mg(2+): aspartate 45 and aspartate 47. The ATP site is built by arginine 116, aspartate 159, arginine 162, arginine 165, and arginine 168. CTP-binding residues include arginine 116, aspartate 159, arginine 162, arginine 165, and arginine 168.

The protein belongs to the tRNA nucleotidyltransferase/poly(A) polymerase family. Bacterial CCA-adding enzyme type 3 subfamily. In terms of assembly, homodimer. Mg(2+) serves as cofactor.

It catalyses the reaction a tRNA precursor + 2 CTP + ATP = a tRNA with a 3' CCA end + 3 diphosphate. The catalysed reaction is a tRNA with a 3' CCA end + 2 CTP + ATP = a tRNA with a 3' CCACCA end + 3 diphosphate. Catalyzes the addition and repair of the essential 3'-terminal CCA sequence in tRNAs without using a nucleic acid template. Adds these three nucleotides in the order of C, C, and A to the tRNA nucleotide-73, using CTP and ATP as substrates and producing inorganic pyrophosphate. tRNA 3'-terminal CCA addition is required both for tRNA processing and repair. Also involved in tRNA surveillance by mediating tandem CCA addition to generate a CCACCA at the 3' terminus of unstable tRNAs. While stable tRNAs receive only 3'-terminal CCA, unstable tRNAs are marked with CCACCA and rapidly degraded. The sequence is that of CCA-adding enzyme from Limosilactobacillus reuteri (strain DSM 20016) (Lactobacillus reuteri).